Consider the following 96-residue polypeptide: Co-chaperonin GroES (96 aa).

Belongs to the GroES chaperonin family. Heptamer of 7 subunits arranged in a ring. Interacts with the chaperonin GroEL.

Its subcellular location is the cytoplasm. Functionally, together with the chaperonin GroEL, plays an essential role in assisting protein folding. The GroEL-GroES system forms a nano-cage that allows encapsulation of the non-native substrate proteins and provides a physical environment optimized to promote and accelerate protein folding. GroES binds to the apical surface of the GroEL ring, thereby capping the opening of the GroEL channel. This Geotalea uraniireducens (strain Rf4) (Geobacter uraniireducens) protein is Co-chaperonin GroES.